Here is a 124-residue protein sequence, read N- to C-terminus: Late histone H2B.2.2 (124 aa).

The interval 1 to 32 (MPAKQTSGKGAKKAGKAKGRPSGASKTRRRKR) is disordered. Positions 10–19 (GAKKAGKAKG) are enriched in basic residues. S111 carries an O-linked (GlcNAc) serine glycan. Residue K119 forms a Glycyl lysine isopeptide (Lys-Gly) (interchain with G-Cter in ubiquitin) linkage.

This sequence belongs to the histone H2B family. The nucleosome is a histone octamer containing two molecules each of H2A, H2B, H3 and H4 assembled in one H3-H4 heterotetramer and two H2A-H2B heterodimers. The octamer wraps approximately 147 bp of DNA. Monoubiquitination of Lys-119 gives a specific tag for epigenetic transcriptional activation and is also prerequisite for histone H3 'Lys-4' and 'Lys-79' methylation. Post-translationally, glcNAcylation at Ser-111 promotes monoubiquitination of Lys-119. It fluctuates in response to extracellular glucose, and associates with transcribed genes.

It is found in the nucleus. The protein resides in the chromosome. Core component of nucleosome. Nucleosomes wrap and compact DNA into chromatin, limiting DNA accessibility to the cellular machineries which require DNA as a template. Histones thereby play a central role in transcription regulation, DNA repair, DNA replication and chromosomal stability. DNA accessibility is regulated via a complex set of post-translational modifications of histones, also called histone code, and nucleosome remodeling. This is Late histone H2B.2.2 from Psammechinus miliaris (Green sea urchin).